The following is a 237-amino-acid chain: Uridylate kinase (237 aa).

11-14 (KLSG) contacts ATP. UMP is bound at residue Gly-53. Residues Gly-54 and Arg-58 each contribute to the ATP site. UMP is bound by residues Asp-73 and 134 to 141 (TGNPFFTT). Thr-161, Tyr-167, and Asp-170 together coordinate ATP.

This sequence belongs to the UMP kinase family. As to quaternary structure, homohexamer.

The protein resides in the cytoplasm. It carries out the reaction UMP + ATP = UDP + ADP. Its pathway is pyrimidine metabolism; CTP biosynthesis via de novo pathway; UDP from UMP (UMPK route): step 1/1. Inhibited by UTP. Its function is as follows. Catalyzes the reversible phosphorylation of UMP to UDP. In Nitrosomonas eutropha (strain DSM 101675 / C91 / Nm57), this protein is Uridylate kinase.